Reading from the N-terminus, the 904-residue chain is MATIHVDGKALEVNGADNLLQACLSLGLDIPYFCWHPALGSVGACRQCAVKQYTDENDTRGRIVMSCMTPASDGTWISIDDEESKAFRASVVEWLMTNHPHDCPVCEEGGHCHLQDMTVMTGHNERRYRFTKRTHQNQDLGPFIAHEMNRCIACYRCVRYYKDYAGGTDLGVYGAHDNVYFGRVEDGVLESEFSGNLTEVCPTGVFTDKTHSERYNRKWDMQFAPSICHGCSSGCNISPGERYGELRRIENRFNGSVNQYFLCDRGRFGYGYVNRKDRPRQPQLADGTKLGLDAALDKAADLLRGRTIVGIGSPRASLESNYGLRELVGAEYFYSGMEAGELARVRLALNVLNNSPLPVPTLRDIEDHDAVFVLGEDLTQTAARVALAVRQATKGKAEAMAEAMKVQPWLDAAVKNIGQHALYPLFIASLAETKLDDVAEECVHAAPADLARIGFAVAHAIDPSAPAVAGLDDEAQALAQRIADALVAAKRPLVVAGTSLADPALIEAAANIAKALKLREKNGSLSLVVPEANSLGLAMLGGESVDAALDAVISGKADAIVVLENDLYARVPAAKVDAALAAAKVVIVADHSKTATVDRAHLVLPAASFAEGDGTLVSQEGRAQRFFQVFDPQYLDSSIQIHEGWRWMHALRATLLNKPVDWTQLDHVTSACAEAAPQLAGIVNAAPSAAFRIKGMKLAREPLRYSGRTAMRANISVHEPRTPQDKDTAFAFSMEGYSGSAEPRQQVPFAWSPGWNSPQAWNKFQDEVGGHLRAGDPGVRLIESQGDRLNWFNAIPGAFNPARGIWTAVPFFHLFGSEESSSRAAPVQERIPAAYVALAKSEADRLGVNDGALLSLNVAGVALRLPLRINEELGAGLVALPKGLAGIPPAIFGASVEGLQEAAQ.

One can recognise a 2Fe-2S ferredoxin-type domain in the interval 1 to 83 (MATIHVDGKA…GTWISIDDEE (83 aa)). Residues Cys34, Cys45, Cys48, and Cys67 each coordinate [2Fe-2S] cluster. In terms of domain architecture, 4Fe-4S His(Cys)3-ligated-type spans 83–122 (ESKAFRASVVEWLMTNHPHDCPVCEEGGHCHLQDMTVMTG). [4Fe-4S] cluster is bound by residues His99, Cys103, Cys106, Cys112, Cys151, Cys154, Cys157, Cys201, Cys228, Cys231, Cys235, and Cys263. Residues 221 to 277 (MQFAPSICHGCSSGCNISPGERYGELRRIENRFNGSVNQYFLCDRGRFGYGYVNRKD) form the 4Fe-4S Mo/W bis-MGD-type domain.

Belongs to the complex I 75 kDa subunit family. In terms of assembly, composed of 13 different subunits. Subunits NuoCD, E, F, and G constitute the peripheral sector of the complex. It depends on [2Fe-2S] cluster as a cofactor. The cofactor is [4Fe-4S] cluster.

It catalyses the reaction a quinone + NADH + 5 H(+)(in) = a quinol + NAD(+) + 4 H(+)(out). In terms of biological role, NDH-1 shuttles electrons from NADH, via FMN and iron-sulfur (Fe-S) centers, to quinones in the respiratory chain. The immediate electron acceptor for the enzyme in this species is believed to be ubiquinone. Couples the redox reaction to proton translocation (for every two electrons transferred, four hydrogen ions are translocated across the cytoplasmic membrane), and thus conserves the redox energy in a proton gradient. This is NADH-quinone oxidoreductase subunit G (nuoG) from Pseudomonas putida (strain ATCC 47054 / DSM 6125 / CFBP 8728 / NCIMB 11950 / KT2440).